We begin with the raw amino-acid sequence, 81 residues long: Trefoil factor 3 (81 aa).

The first 23 residues, 1-23, serve as a signal peptide directing secretion; it reads MEARTFWLLVVAVLALGSSSSTG. Residues 31 to 74 form the P-type domain; the sequence is NQCAVPAKDRVDCGYPEVTPEQCNNRGCCFDSSIHGVPWCFKPL. 3 disulfide bridges follow: Cys33–Cys59, Cys43–Cys58, and Cys53–Cys70.

As to quaternary structure, monomer. Homodimer; disulfide-linked.

It localises to the secreted. Its subcellular location is the extracellular space. It is found in the extracellular matrix. The protein resides in the cytoplasm. Functionally, involved in the maintenance and repair of the intestinal mucosa. Promotes the mobility of epithelial cells in healing processes (motogen). The protein is Trefoil factor 3 (TFF3) of Bos taurus (Bovine).